The following is a 177-amino-acid chain: UPF0114 protein HPP12_0190 (177 aa).

Transmembrane regions (helical) follow at residues 15-35, 54-74, 102-122, and 145-165; these read WLLAPLCIAMSLVLVVLGYAF, LVLSALGLVDLLFMAGLVLMV, FNALKLKVSLSIVAISAIFLL, and PIFWQVVINLVFVCSALLAAV.

Belongs to the UPF0114 family.

Its subcellular location is the cell membrane. The chain is UPF0114 protein HPP12_0190 from Helicobacter pylori (strain P12).